The following is a 121-amino-acid chain: Large ribosomal subunit protein bL19 (121 aa).

This sequence belongs to the bacterial ribosomal protein bL19 family.

In terms of biological role, this protein is located at the 30S-50S ribosomal subunit interface and may play a role in the structure and function of the aminoacyl-tRNA binding site. The chain is Large ribosomal subunit protein bL19 from Mesomycoplasma hyopneumoniae (strain 7448) (Mycoplasma hyopneumoniae).